Reading from the N-terminus, the 321-residue chain is Glucokinase (321 aa).

Residue 8–13 (GDVGGT) participates in ATP binding.

It belongs to the bacterial glucokinase family.

It localises to the cytoplasm. It carries out the reaction D-glucose + ATP = D-glucose 6-phosphate + ADP + H(+). This chain is Glucokinase, found in Citrobacter koseri (strain ATCC BAA-895 / CDC 4225-83 / SGSC4696).